We begin with the raw amino-acid sequence, 460 residues long: ATP synthase subunit beta (460 aa).

150 to 157 (GGAGVGKT) serves as a coordination point for ATP.

It belongs to the ATPase alpha/beta chains family. F-type ATPases have 2 components, CF(1) - the catalytic core - and CF(0) - the membrane proton channel. CF(1) has five subunits: alpha(3), beta(3), gamma(1), delta(1), epsilon(1). CF(0) has three main subunits: a(1), b(2) and c(9-12). The alpha and beta chains form an alternating ring which encloses part of the gamma chain. CF(1) is attached to CF(0) by a central stalk formed by the gamma and epsilon chains, while a peripheral stalk is formed by the delta and b chains.

It is found in the cell inner membrane. It carries out the reaction ATP + H2O + 4 H(+)(in) = ADP + phosphate + 5 H(+)(out). Functionally, produces ATP from ADP in the presence of a proton gradient across the membrane. The catalytic sites are hosted primarily by the beta subunits. The protein is ATP synthase subunit beta of Salmonella agona (strain SL483).